A 214-amino-acid chain; its full sequence is Large ribosomal subunit protein uL1 (214 aa).

This sequence belongs to the universal ribosomal protein uL1 family. In terms of assembly, part of the 50S ribosomal subunit.

Functionally, binds directly to 23S rRNA. Probably involved in E site tRNA release. In terms of biological role, protein L1 is also a translational repressor protein, it controls the translation of its operon by binding to its mRNA. This chain is Large ribosomal subunit protein uL1, found in Methanoregula boonei (strain DSM 21154 / JCM 14090 / 6A8).